A 333-amino-acid chain; its full sequence is Nucleoid-associated protein HAPS_0704 (333 aa).

Belongs to the YejK family.

It is found in the cytoplasm. The protein localises to the nucleoid. This is Nucleoid-associated protein HAPS_0704 from Glaesserella parasuis serovar 5 (strain SH0165) (Haemophilus parasuis).